Consider the following 407-residue polypeptide: RING finger protein 44 (407 aa).

The interval Leu26–Leu58 is disordered. The segment at Cys355–Arg396 adopts an RING-type; atypical zinc-finger fold.

The polypeptide is RING finger protein 44 (Rnf44) (Mus musculus (Mouse)).